Reading from the N-terminus, the 232-residue chain is Charged multivesicular body protein 4c (232 aa).

Disordered regions lie at residues 1–23 (MSKLGKFFKGTRSSRARAAPSAQ) and 177–232 (NKKM…AWAT). The segment at 1 to 153 (MSKLGKFFKG…EISEAFSQRV (153 aa)) is intramolecular interaction with C-terminus. 2 coiled-coil regions span residues 21–45 (SAQEALARLRETEEMLAKKQEYLEN) and 125–185 (LNKI…SLEL). Positions 154 to 232 (QFADGFDEAE…DFKQLAAWAT (79 aa)) are intramolecular interaction with N-terminus. Serine 210 carries the phosphoserine; by AURKB modification.

This sequence belongs to the SNF7 family. As to quaternary structure, probable core component of the endosomal sorting required for transport complex III (ESCRT-III). ESCRT-III components are thought to multimerize to form a flat lattice on the perimeter membrane of the endosome. Several assembly forms of ESCRT-III may exist that interact and act sequentially. Self-associates. Interacts with CHMP2A. Interacts with CHMP4A. Interacts with CHMP4B. Interacts with CHMP6. Interacts with VPS4A. Interacts with PDCD6IP; the interaction is direct. Post-translationally, phosphorylated at Ser-210 by AURKB during cytokinesis: together with ZFYVE19/ANCHR, phosphorylated CHMP4C retains abscission-competent VPS4 (VPS4A and/or VPS4B) at the midbody ring until abscission checkpoint signaling is terminated at late cytokinesis.

The protein localises to the cytoplasm. It localises to the cytosol. The protein resides in the late endosome membrane. Its subcellular location is the midbody. It is found in the midbody ring. Probable core component of the endosomal sorting required for transport complex III (ESCRT-III) which is involved in multivesicular bodies (MVBs) formation and sorting of endosomal cargo proteins into MVBs. MVBs contain intraluminal vesicles (ILVs) that are generated by invagination and scission from the limiting membrane of the endosome and mostly are delivered to lysosomes enabling degradation of membrane proteins, such as stimulated growth factor receptors, lysosomal enzymes and lipids. The MVB pathway appears to require the sequential function of ESCRT-O, -I,-II and -III complexes. ESCRT-III proteins mostly dissociate from the invaginating membrane before the ILV is released. The ESCRT machinery also functions in topologically equivalent membrane fission events, such as the terminal stages of cytokinesis. Key component of the cytokinesis checkpoint, a process required to delay abscission to prevent both premature resolution of intercellular chromosome bridges and accumulation of DNA damage: upon phosphorylation by AURKB, together with ZFYVE19/ANCHR, retains abscission-competent VPS4 (VPS4A and/or VPS4B) at the midbody ring until abscission checkpoint signaling is terminated at late cytokinesis. Deactivation of AURKB results in dephosphorylation of CHMP4C followed by its dissociation from ANCHR and VPS4 and subsequent abscission. ESCRT-III proteins are believed to mediate the necessary vesicle extrusion and/or membrane fission activities, possibly in conjunction with the AAA ATPase VPS4. CHMP4A/B/C are required for the exosomal release of SDCBP, CD63 and syndecan. This chain is Charged multivesicular body protein 4c (Chmp4c), found in Mus musculus (Mouse).